The following is a 508-amino-acid chain: ATP synthase subunit alpha, chloroplastic (508 aa).

Residue 170-177 (GDRQTGKT) participates in ATP binding.

Belongs to the ATPase alpha/beta chains family. In terms of assembly, F-type ATPases have 2 components, F(1) - the catalytic core - and F(0) - the membrane proton channel. F(1) has five subunits: alpha(3), beta(3), gamma(1), delta(1), epsilon(1). F(0) has four main subunits: a(1), b(1), b'(1) and c(10-14). The alpha and beta chains form an alternating ring which encloses part of the gamma chain. F(1) is attached to F(0) by a central stalk formed by the gamma and epsilon chains, while a peripheral stalk is formed by the delta, b and b' chains.

Its subcellular location is the plastid. It localises to the chloroplast thylakoid membrane. The catalysed reaction is ATP + H2O + 4 H(+)(in) = ADP + phosphate + 5 H(+)(out). Its function is as follows. F(1)F(0) ATP synthase produces ATP from ADP in the presence of a proton or sodium gradient. F-type ATPases consist of two structural domains, F(1) containing the extramembraneous catalytic core and F(0) containing the membrane proton channel, linked together by a central stalk and a peripheral stalk. During catalysis, ATP synthesis in the catalytic domain of F(1) is coupled via a rotary mechanism of the central stalk subunits to proton translocation. Functionally, the alpha chain is a regulatory subunit. The protein is ATP synthase subunit alpha, chloroplastic of Chlamydomonas reinhardtii (Chlamydomonas smithii).